Reading from the N-terminus, the 493-residue chain is tRNA (uracil-5-)-methyltransferase homolog B (493 aa).

Residues 1-14 constitute a mitochondrion transit peptide; that stretch reads MHNPRLFLSRAGFF. S-adenosyl-L-methionine-binding residues include Gln312, Glu362, and Asn412. Cys440 functions as the Nucleophile in the catalytic mechanism. Glu486 functions as the Proton acceptor in the catalytic mechanism.

It belongs to the class I-like SAM-binding methyltransferase superfamily. RNA M5U methyltransferase family.

It is found in the mitochondrion matrix. It carries out the reaction uridine(54) in tRNA + S-adenosyl-L-methionine = 5-methyluridine(54) in tRNA + S-adenosyl-L-homocysteine + H(+). The enzyme catalyses a uridine in 12S rRNA + S-adenosyl-L-methionine = a 5-methyluridine in 12S rRNA + S-adenosyl-L-homocysteine + H(+). Functionally, mitochondrial S-adenosyl-L-methionine-dependent methyltransferase that catalyzes the formation of 5-methyl-uridine in tRNAs and 12S rRNA. Catalyzes the methylation of uridine at position 54 (m5U54) in all tRNAs. Specifically methylates the uridine in position 425 of 12S rRNA (m5U425). Does not affect RNA stability or mitochondrial translation. This chain is tRNA (uracil-5-)-methyltransferase homolog B, found in Mus musculus (Mouse).